We begin with the raw amino-acid sequence, 128 residues long: Con-Ins F2 (128 aa).

The signal sequence occupies residues 1-24; that stretch reads MTTSSYFLLVALGLLLYVCRSSFG. Cystine bridges form between Cys29-Cys104, Cys41-Cys107, Cys53-Cys120, and Cys106-Cys111. A propeptide spans 59–89 (c peptide); that stretch reads LQGGTGKKRGRASLLRKRRAFLSMLKARAKR. At Glu115 the chain carries 4-carboxyglutamate; partial. The residue at position 127 (Ser127) is a Serine amide.

It belongs to the insulin family. As to quaternary structure, heterodimer of A and B chains; disulfide-linked. As to expression, expressed by the venom gland.

The protein resides in the secreted. Its function is as follows. This venom insulin facilitates prey capture by rapidly inducing hypoglycemic shock. Intraperitoneal injection of this peptide into zebrafish lowers blood glucose with the same potency than human insulin. In vivo, when applied to water, this peptide reduces overall locomotor activity of zebrafish larvae, observed as a significant decrease in the percentage of time spent swimming and movement frequency. This Conus floridulus (Cone snail) protein is Con-Ins F2.